A 406-amino-acid polypeptide reads, in one-letter code: Tryptophan synthase beta chain (406 aa).

K99 bears the N6-(pyridoxal phosphate)lysine mark.

It belongs to the TrpB family. In terms of assembly, tetramer of two alpha and two beta chains. Pyridoxal 5'-phosphate is required as a cofactor.

It carries out the reaction (1S,2R)-1-C-(indol-3-yl)glycerol 3-phosphate + L-serine = D-glyceraldehyde 3-phosphate + L-tryptophan + H2O. The protein operates within amino-acid biosynthesis; L-tryptophan biosynthesis; L-tryptophan from chorismate: step 5/5. Its function is as follows. The beta subunit is responsible for the synthesis of L-tryptophan from indole and L-serine. The chain is Tryptophan synthase beta chain from Brucella melitensis biotype 2 (strain ATCC 23457).